A 61-amino-acid polypeptide reads, in one-letter code: Metallothionein-2 (61 aa).

Met-1 is subject to N-acetylmethionine. Positions 1–29 are beta; it reads MDPNCSCATDGSCSCSGSCKCKECKCTTC. A divalent metal cation-binding residues include Cys-5, Cys-7, Cys-13, Cys-15, Cys-19, Cys-21, Cys-24, Cys-26, Cys-29, Cys-33, Cys-34, Cys-36, Cys-37, Cys-41, Cys-44, Cys-48, Cys-50, and Cys-57. The alpha stretch occupies residues 30–61; the sequence is KKSCCSCCPVGCAKCSQGCVCKEASEKCSCCA. Phosphoserine is present on Ser-58. Residues Cys-59 and Cys-60 each contribute to the a divalent metal cation site.

The protein belongs to the metallothionein superfamily. Type 1 family.

In terms of biological role, metallothioneins have a high content of cysteine residues that bind various heavy metals; these proteins are transcriptionally regulated by both heavy metals and glucocorticoids. This is Metallothionein-2 (MT2) from Mesocricetus auratus (Golden hamster).